Reading from the N-terminus, the 314-residue chain is Ribonuclease Z (314 aa).

7 residues coordinate Zn(2+): H62, H64, D66, H67, H139, D210, and H268. Residue D66 is the Proton acceptor of the active site.

The protein belongs to the RNase Z family. Homodimer. Zn(2+) serves as cofactor.

The catalysed reaction is Endonucleolytic cleavage of RNA, removing extra 3' nucleotides from tRNA precursor, generating 3' termini of tRNAs. A 3'-hydroxy group is left at the tRNA terminus and a 5'-phosphoryl group is left at the trailer molecule.. Zinc phosphodiesterase, which displays some tRNA 3'-processing endonuclease activity. Probably involved in tRNA maturation, by removing a 3'-trailer from precursor tRNA. The chain is Ribonuclease Z from Acaryochloris marina (strain MBIC 11017).